The primary structure comprises 187 residues: NADH-quinone oxidoreductase subunit B (187 aa).

Residues Cys66, Cys67, Cys131, and Cys161 each contribute to the [4Fe-4S] cluster site.

The protein belongs to the complex I 20 kDa subunit family. As to quaternary structure, NDH-1 is composed of 14 different subunits. Subunits NuoB, C, D, E, F, and G constitute the peripheral sector of the complex. It depends on [4Fe-4S] cluster as a cofactor.

The protein localises to the cell inner membrane. It catalyses the reaction a quinone + NADH + 5 H(+)(in) = a quinol + NAD(+) + 4 H(+)(out). In terms of biological role, NDH-1 shuttles electrons from NADH, via FMN and iron-sulfur (Fe-S) centers, to quinones in the respiratory chain. The immediate electron acceptor for the enzyme in this species is believed to be ubiquinone. Couples the redox reaction to proton translocation (for every two electrons transferred, four hydrogen ions are translocated across the cytoplasmic membrane), and thus conserves the redox energy in a proton gradient. This chain is NADH-quinone oxidoreductase subunit B, found in Methylocella silvestris (strain DSM 15510 / CIP 108128 / LMG 27833 / NCIMB 13906 / BL2).